We begin with the raw amino-acid sequence, 117 residues long: Large ribosomal subunit protein uL22 (117 aa).

It belongs to the universal ribosomal protein uL22 family. As to quaternary structure, part of the 50S ribosomal subunit.

Its function is as follows. This protein binds specifically to 23S rRNA; its binding is stimulated by other ribosomal proteins, e.g. L4, L17, and L20. It is important during the early stages of 50S assembly. It makes multiple contacts with different domains of the 23S rRNA in the assembled 50S subunit and ribosome. Functionally, the globular domain of the protein is located near the polypeptide exit tunnel on the outside of the subunit, while an extended beta-hairpin is found that lines the wall of the exit tunnel in the center of the 70S ribosome. This Lactobacillus gasseri (strain ATCC 33323 / DSM 20243 / BCRC 14619 / CIP 102991 / JCM 1131 / KCTC 3163 / NCIMB 11718 / NCTC 13722 / AM63) protein is Large ribosomal subunit protein uL22.